The following is a 254-amino-acid chain: Uridine-cytidine kinase 1 (254 aa).

A disordered region spans residues 1-29 (MASAGGDECEGAAPEADRPHQRPFLIGVS). An ATP-binding site is contributed by 30–38 (GGTASGKST). Positions 87, 115, 120, 146, 155, and 163 each coordinate substrate. Asp192 serves as a coordination point for ATP. The tract at residues 224–254 (SYKRTFSEPGDHPGMLTSGKRSHLESSSRPH) is disordered. A Phosphothreonine modification is found at Thr228. Position 230 is a phosphoserine (Ser230). Positions 245-254 (SHLESSSRPH) are enriched in basic and acidic residues.

Belongs to the uridine kinase family.

It carries out the reaction uridine + ATP = UMP + ADP + H(+). The catalysed reaction is cytidine + ATP = CMP + ADP + H(+). It functions in the pathway pyrimidine metabolism; CTP biosynthesis via salvage pathway; CTP from cytidine: step 1/3. Its pathway is pyrimidine metabolism; UMP biosynthesis via salvage pathway; UMP from uridine: step 1/1. In terms of biological role, phosphorylates uridine and cytidine to uridine monophosphate and cytidine monophosphate. Does not phosphorylate deoxyribonucleosides or purine ribonucleosides. Can use ATP or GTP as a phosphate donor. In Macaca fascicularis (Crab-eating macaque), this protein is Uridine-cytidine kinase 1 (UCK1).